Here is a 501-residue protein sequence, read N- to C-terminus: Ammonium transporter 1 member 1 (501 aa).

The next 10 membrane-spanning stretches (helical) occupy residues 8 to 28 (LAVL…GQLG), 46 to 66 (LLFS…LCAG), 81 to 101 (VLDA…FAFG), 128 to 148 (FLYQ…SIAE), 152 to 172 (FVAY…VVSH), 199 to 219 (FAGS…GALI), 243 to 263 (LVVL…PGSF), 333 to 353 (VVEP…LLGC), 366 to 386 (LEAA…TALF), and 419 to 439 (LIQI…LFFI). Phosphothreonine is present on T460. S475, S488, S490, and S492 each carry phosphoserine.

The protein belongs to the ammonia transporter channel (TC 1.A.11.2) family. In terms of assembly, self interacts. Interacts with the receptor protein kinases CEPR2, At2g28990 and PAM74. Highly expressed in roots. Expressed in root tips, root hairs, root epidermis, rhizodermis, cortex and pericycle. Expressed in leaves epidermal and mesophyll cells.

It is found in the cell membrane. Functionally, high affinity ammonium transporter probably involved in ammonium uptake from the soil, long-distance transport to the shoots and re-uptake of apoplastic ammonium that derives from photorespiration in shoots. Contributes with AMT1-3 to the overall ammonium uptake capacity in roots under nitrogen-deficiency conditions. The protein is Ammonium transporter 1 member 1 (AMT1-1) of Arabidopsis thaliana (Mouse-ear cress).